The chain runs to 1809 residues: Pyochelin synthetase PchF (1809 aa).

The interval 69–490 (FPLTPVQAAY…GLLRRLAQSP (422 aa)) is condensation/cyclization. An adenylation region spans residues 520–915 (FAERALLTPD…GREDDQVKIR (396 aa)). Residues 1407 to 1488 (APADELENAL…GLAERLRSAP (82 aa)) enclose the Carrier domain. Serine 1442 carries the O-(pantetheine 4'-phosphoryl)serine modification. The tract at residues 1584–1797 (LGRRYAEALH…FDCLGEALAQ (214 aa)) is thioesterase.

This sequence belongs to the NRP synthetase family. The cofactor is pantetheine 4'-phosphate.

It carries out the reaction holo-[peptidyl-carrier protein] + L-cysteine + ATP = L-cysteinyl-[peptidyl-carrier protein] + AMP + diphosphate. It participates in siderophore biosynthesis. In terms of biological role, involved in the biosynthesis of the siderophore pyochelin. Adenylates L-cysteine and loads it onto its peptidyl carrier domain via a thioester linkage to the phosphopanthetheine moiety. Then forms a peptide bond between the salicyl-thiazolinyl intermediate bound to the second carrier domain of PchE and the cysteine bound to its own peptidyl carrier domain to form the salicyl-thiazolinyl-cysteinyl-S-PCP2 intermediate. It subsequently cyclizes the C-terminal cysteine to form the second thiazoline heterocycle in the salicyl-thiazolinyl-thiazolinyl-S-PCP2 intermediate. When this intermediate is released by the action of a thioesterase, it produces the tricyclic acid hydroxyphenyl-thiazolyl-thiazolinyl-carboxylic acid (HPTT-COOH), an advanced intermediate containing the aryl-4,2-bis-heterocyclic skeleton of the bithiazoline class of siderophores. This Pseudomonas aeruginosa (strain ATCC 15692 / DSM 22644 / CIP 104116 / JCM 14847 / LMG 12228 / 1C / PRS 101 / PAO1) protein is Pyochelin synthetase PchF.